Reading from the N-terminus, the 530-residue chain is 26S proteasome non-ATPase regulatory subunit 3 (530 aa).

Over residues 1 to 16 (MKQEGSARRRGADKAK) the composition is skewed to basic and acidic residues. Positions 1 to 65 (MKQEGSARRR…TEHSQRELDT (65 aa)) are disordered. A compositionally biased stretch (pro residues) spans 17 to 30 (PPPGGEQEPPPPAP). Lys-36 is covalently cross-linked (Glycyl lysine isopeptide (Lys-Gly) (interchain with G-Cter in SUMO1); alternate). Lys-36 is covalently cross-linked (Glycyl lysine isopeptide (Lys-Gly) (interchain with G-Cter in SUMO2); alternate). Positions 282-461 (ARYLYYTGRI…GYVQSKEMID (180 aa)) constitute a PCI domain. Ser-414 and Ser-426 each carry phosphoserine. Residues 496–530 (SYNKDLESAEERREREQQDLEFAKEMAEDDDDSFP) form a disordered region. The segment covering 497–521 (YNKDLESAEERREREQQDLEFAKEM) has biased composition (basic and acidic residues).

This sequence belongs to the proteasome subunit S3 family. In terms of assembly, component of the 19S proteasome regulatory particle complex. The 26S proteasome consists of a 20S core particle (CP) and two 19S regulatory subunits (RP). The regulatory particle is made of a lid composed of 9 subunits including PSMD3, a base containing 6 ATPases and few additional components. Interacts with UBQLN1 (via ubiquitin-like domain). Interacts with ERCC6.

In terms of biological role, component of the 26S proteasome, a multiprotein complex involved in the ATP-dependent degradation of ubiquitinated proteins. This complex plays a key role in the maintenance of protein homeostasis by removing misfolded or damaged proteins, which could impair cellular functions, and by removing proteins whose functions are no longer required. Therefore, the proteasome participates in numerous cellular processes, including cell cycle progression, apoptosis, or DNA damage repair. The chain is 26S proteasome non-ATPase regulatory subunit 3 (Psmd3) from Mus musculus (Mouse).